A 453-amino-acid polypeptide reads, in one-letter code: Collagen alpha-4(IV) chain (453 aa).

Positions 1–218 are disordered; sequence GPPGPPGAPG…PPGPMGDPGP (218 aa). The tract at residues 1–222 is triple-helical region; it reads GPPGPPGAPG…MGDPGPIGFG (222 aa). Pro residues-rich tracts occupy residues 26–44, 60–72, and 95–122; these read QGPP…PGPP, PGPP…PGPP, and PQGP…PLGP. Low complexity predominate over residues 153–162; that stretch reads PEGTMGLPGM. A compositionally biased stretch (basic and acidic residues) spans 174 to 183; that stretch reads PGLDGRRGED. Pro residues predominate over residues 206 to 215; the sequence is APGPPGPMGD. One can recognise a Collagen IV NC1 domain in the interval 228–453; the sequence is GFLLVLHSQT…SRCQVCVKHS (226 aa). 6 disulfides stabilise this stretch: C243-C332, C276-C329, C288-C294, C351-C449, C385-C446, and C397-C404.

This sequence belongs to the type IV collagen family. As to quaternary structure, there are six type IV collagen isoforms, alpha 1(IV)-alpha 6(IV), each of which can form a triple helix structure with 2 other chains to generate type IV collagen network. The alpha 3(IV) chain forms a triple helical protomer with alpha 4(IV) and alpha 5(IV); this triple helical structure dimerizes through NC1-NC1 domain interactions such that the alpha 3(IV), alpha 4(IV) and alpha 5(IV) chains of one protomer connect with the alpha 5(IV), alpha 4(IV) and alpha 3(IV) chains of the opposite protomer, respectively. Associates with LAMB2 at the neuromuscular junction and in GBM. Prolines at the third position of the tripeptide repeating unit (G-X-Y) are hydroxylated in some or all of the chains. In terms of processing, type IV collagens contain numerous cysteine residues which are involved in inter- and intramolecular disulfide bonding. 12 of these, located in the NC1 domain, are conserved in all known type IV collagens. Post-translationally, the trimeric structure of the NC1 domains is stabilized by covalent bonds between Lys and Met residues. As to expression, alpha 3 and alpha 4 type IV collagens are colocalized and present only in basement membranes of kidney, eye, cochlea, lung and brain.

The protein localises to the secreted. The protein resides in the extracellular space. It localises to the extracellular matrix. Its subcellular location is the basement membrane. Its function is as follows. Type IV collagen is the major structural component of glomerular basement membranes (GBM), forming a 'chicken-wire' meshwork together with laminins, proteoglycans and entactin/nidogen. This is Collagen alpha-4(IV) chain (COL4A4) from Bos taurus (Bovine).